The following is a 384-amino-acid chain: Succinyl-diaminopimelate desuccinylase (384 aa).

Zn(2+) is bound at residue H75. D77 is an active-site residue. D108 lines the Zn(2+) pocket. The active-site Proton acceptor is the E142. Residues E143, E171, and H357 each contribute to the Zn(2+) site.

This sequence belongs to the peptidase M20A family. DapE subfamily. In terms of assembly, homodimer. Requires Zn(2+) as cofactor. The cofactor is Co(2+).

The catalysed reaction is N-succinyl-(2S,6S)-2,6-diaminopimelate + H2O = (2S,6S)-2,6-diaminopimelate + succinate. It functions in the pathway amino-acid biosynthesis; L-lysine biosynthesis via DAP pathway; LL-2,6-diaminopimelate from (S)-tetrahydrodipicolinate (succinylase route): step 3/3. Its function is as follows. Catalyzes the hydrolysis of N-succinyl-L,L-diaminopimelic acid (SDAP), forming succinate and LL-2,6-diaminopimelate (DAP), an intermediate involved in the bacterial biosynthesis of lysine and meso-diaminopimelic acid, an essential component of bacterial cell walls. This Shewanella oneidensis (strain ATCC 700550 / JCM 31522 / CIP 106686 / LMG 19005 / NCIMB 14063 / MR-1) protein is Succinyl-diaminopimelate desuccinylase.